Here is a 65-residue protein sequence, read N- to C-terminus: Large ribosomal subunit protein bL35 (65 aa).

The tract at residues 1–26 is disordered; it reads MPKIKTLRGAAKRFKKTASGGFKRKQ. The span at 10-26 shows a compositional bias: basic residues; the sequence is AAKRFKKTASGGFKRKQ.

The protein belongs to the bacterial ribosomal protein bL35 family.

The sequence is that of Large ribosomal subunit protein bL35 from Histophilus somni (strain 2336) (Haemophilus somnus).